Here is a 153-residue protein sequence, read N- to C-terminus: Putative pre-16S rRNA nuclease (153 aa).

The protein belongs to the YqgF nuclease family.

The protein localises to the cytoplasm. In terms of biological role, could be a nuclease involved in processing of the 5'-end of pre-16S rRNA. The sequence is that of Putative pre-16S rRNA nuclease from Koribacter versatilis (strain Ellin345).